An 868-amino-acid chain; its full sequence is Leucine--tRNA ligase (868 aa).

The 'HIGH' region motif lies at 42 to 52 (PYPSGKLHMGH). The 'KMSKS' region motif lies at 627-631 (KMSKS). Position 630 (Lys630) interacts with ATP.

This sequence belongs to the class-I aminoacyl-tRNA synthetase family.

It is found in the cytoplasm. The enzyme catalyses tRNA(Leu) + L-leucine + ATP = L-leucyl-tRNA(Leu) + AMP + diphosphate. The chain is Leucine--tRNA ligase from Pseudomonas entomophila (strain L48).